Here is a 208-residue protein sequence, read N- to C-terminus: Small ribosomal subunit protein uS4 (208 aa).

An S4 RNA-binding domain is found at 98–158; sequence RRLDNVVYRL…EKSRKIACIN (61 aa).

It belongs to the universal ribosomal protein uS4 family. In terms of assembly, part of the 30S ribosomal subunit. Contacts protein S5. The interaction surface between S4 and S5 is involved in control of translational fidelity.

In terms of biological role, one of the primary rRNA binding proteins, it binds directly to 16S rRNA where it nucleates assembly of the body of the 30S subunit. With S5 and S12 plays an important role in translational accuracy. This Geobacter sulfurreducens (strain ATCC 51573 / DSM 12127 / PCA) protein is Small ribosomal subunit protein uS4.